A 306-amino-acid chain; its full sequence is TnpB-like protein aq_aa05 (306 aa).

Zn(2+) is bound by residues Cys-213, Cys-216, Cys-234, and Cys-237.

The protein belongs to the transposase 35 family.

In Aquifex aeolicus (strain VF5), this protein is TnpB-like protein aq_aa05.